Consider the following 214-residue polypeptide: Adenylate kinase (214 aa).

Residue 10-15 (GAGKGT) participates in ATP binding. Residues 30–59 (STGDMLRAAIKAGTELGKQAKSVIDAGQLV) form an NMP region. AMP is bound by residues T31, R36, 57-59 (QLV), 85-88 (GFPR), and Q92. The tract at residues 122–159 (GRRAHLPSGRTYHVVYNPPKEEGKDDETGEPLVIREDD) is LID. Residues R123 and 132–133 (TY) each bind ATP. AMP is bound by residues R156 and R167. K200 contacts ATP.

The protein belongs to the adenylate kinase family. In terms of assembly, monomer.

The protein localises to the cytoplasm. The catalysed reaction is AMP + ATP = 2 ADP. It functions in the pathway purine metabolism; AMP biosynthesis via salvage pathway; AMP from ADP: step 1/1. In terms of biological role, catalyzes the reversible transfer of the terminal phosphate group between ATP and AMP. Plays an important role in cellular energy homeostasis and in adenine nucleotide metabolism. The polypeptide is Adenylate kinase (Aliivibrio fischeri (strain ATCC 700601 / ES114) (Vibrio fischeri)).